The primary structure comprises 603 residues: Insulin-like growth factor-binding protein complex acid labile subunit (603 aa).

The signal sequence occupies residues 1–23 (MALRTGGPALVVLLAFWVALGPC). The LRRNT domain occupies 32–74 (ASADAEGPQCPVACTCSHDDYTDELSVFCSSKNLTHLPDDIPV). Disulfide bonds link cysteine 41–cysteine 47 and cysteine 45–cysteine 60. Asparagine 64, asparagine 85, and asparagine 96 each carry an N-linked (GlcNAc...) asparagine glycan. LRR repeat units follow at residues 75 to 96 (STRA…AFQN), 99 to 120 (SLDF…ALLG), 123 to 144 (NLYY…LFTH), 147 to 168 (SLAS…LFQG), 171 to 192 (HLWD…VFQG), 195 to 216 (NLHE…LFCG), 219 to 240 (ELRE…VFVH), 243 to 264 (RLQK…AFLG), 267 to 288 (ALRW…TFPG), 291 to 312 (GLHV…TFKD), 315 to 336 (FLEE…TFEG), 339 to 360 (QLEV…AFSG), 363 to 384 (NVAV…VFQG), 387 to 408 (KLHS…TFAG), 411 to 432 (GLRR…SLAG), 435 to 456 (ELLE…LFQG), 459 to 480 (HLEY…VLGP), 483 to 504 (RAFW…LFSS), and 507 to 528 (RVRY…PGLE). Asparagine 368 is a glycosylation site (N-linked (GlcNAc...) asparagine). Residue asparagine 515 is glycosylated (N-linked (GlcNAc...) asparagine). One can recognise an LRRCT domain in the interval 535–603 (NPWDCSCPLK…DVSETHFVHC (69 aa)). Intrachain disulfides connect cysteine 539–cysteine 581, cysteine 541–cysteine 603, and cysteine 565–cysteine 570. Asparagine 578 and asparagine 586 each carry an N-linked (GlcNAc...) asparagine glycan.

As to quaternary structure, forms a ternary complex with IGF1 and IGFBP3. As to expression, brain, kidney, lung, heart, spleen, muscle and liver.

It localises to the secreted. It is found in the extracellular space. May have an important role in regulating the access of circulating IGFs to the tissues. The sequence is that of Insulin-like growth factor-binding protein complex acid labile subunit (Igfals) from Rattus norvegicus (Rat).